Consider the following 951-residue polypeptide: Exportin-2 (951 aa).

Residues 29-104 (ATSKIQKFVK…KSLLLNFILS (76 aa)) enclose the Importin N-terminal domain.

The protein belongs to the XPO2/CSE1 family.

Its subcellular location is the cytoplasm. It is found in the nucleus. In terms of biological role, export receptor for importin alpha. Mediates importin-alpha re-export from the nucleus to the cytoplasm after import substrates have been released into the nucleoplasm. The protein is Exportin-2 (xpo2) of Dictyostelium discoideum (Social amoeba).